The chain runs to 59 residues: Temperature acclimation protein A (59 aa).

One can recognise a CSD domain in the interval phenylalanine 1–valine 55.

It localises to the cytoplasm. Its function is as follows. Affects cell viability at low temperatures. This is Temperature acclimation protein A (tapA) from Pseudomonas fragi.